The primary structure comprises 456 residues: Glycine receptor subunit alpha-4 (456 aa).

The N-terminal stretch at 1-27 (MTTLVPASLFLLLWTLPGKVLLSVALA) is a signal peptide. Residues 28–256 (KEDVKSGLKG…KFHLERQMGY (229 aa)) are Extracellular-facing. N-linked (GlcNAc...) asparagine glycosylation is present at N71. 2 disulfides stabilise this stretch: C171/C185 and C232/C243. A strychnine-binding site is contributed by 236–241 (YNTGKF). Residues 257 to 278 (YLIQMYIPSLLIVILSWVSFWI) form a helical membrane-spanning segment. Topologically, residues 279–283 (NMDAA) are cytoplasmic. A helical membrane pass occupies residues 284 to 304 (PARVGLGITTVLTMTTQSSGS). The Extracellular segment spans residues 305 to 315 (RASLPKVSYVK). A helical membrane pass occupies residues 316 to 336 (AIDIWMAVCLLFVFAALLEYA). Topologically, residues 337–423 (AVNFVSRQHK…YVDRAKRIDT (87 aa)) are cytoplasmic. A helical membrane pass occupies residues 424 to 444 (ISRAVFPFTFLVFNIFYWVVY). Topologically, residues 445-456 (KVLRSEDIHQAL) are extracellular.

The protein belongs to the ligand-gated ion channel (TC 1.A.9) family. Glycine receptor (TC 1.A.9.3) subfamily. GLRA4 sub-subfamily. Homopentamer (in vitro). Heteropentamer composed of GLRA4 and GLRB. In terms of tissue distribution, detected in the retina inner plexiform layer, especially at the border between layer three and four (at protein level).

Its subcellular location is the postsynaptic cell membrane. It is found in the synapse. The protein localises to the perikaryon. It localises to the cell projection. The protein resides in the dendrite. Its subcellular location is the cell membrane. The enzyme catalyses chloride(in) = chloride(out). Its activity is regulated as follows. Inhibited by strychnine. In terms of biological role, glycine receptors are ligand-gated chloride channels. Channel opening is triggered by extracellular glycine. Channel opening is also triggered by taurine and beta-alanine. Plays a role in the down-regulation of neuronal excitability. Contributes to the generation of inhibitory postsynaptic currents. The sequence is that of Glycine receptor subunit alpha-4 (Glra4) from Mus musculus (Mouse).